Consider the following 222-residue polypeptide: Octanoyltransferase (222 aa).

The BPL/LPL catalytic domain occupies 35 to 214 (GTAPELIWLL…HLDGFLARLD (180 aa)). Substrate is bound by residues 73-80 (RGGRYTYH), 145-147 (AIG), and 158-160 (GFS). The active-site Acyl-thioester intermediate is the C176.

The protein belongs to the LipB family.

It localises to the cytoplasm. It catalyses the reaction octanoyl-[ACP] + L-lysyl-[protein] = N(6)-octanoyl-L-lysyl-[protein] + holo-[ACP] + H(+). Its pathway is protein modification; protein lipoylation via endogenous pathway; protein N(6)-(lipoyl)lysine from octanoyl-[acyl-carrier-protein]: step 1/2. Catalyzes the transfer of endogenously produced octanoic acid from octanoyl-acyl-carrier-protein onto the lipoyl domains of lipoate-dependent enzymes. Lipoyl-ACP can also act as a substrate although octanoyl-ACP is likely to be the physiological substrate. The polypeptide is Octanoyltransferase (Novosphingobium aromaticivorans (strain ATCC 700278 / DSM 12444 / CCUG 56034 / CIP 105152 / NBRC 16084 / F199)).